A 572-amino-acid chain; its full sequence is Light-independent protochlorophyllide reductase subunit N (572 aa).

Cys-106, Cys-131, and Cys-191 together coordinate [4Fe-4S] cluster. The interval 249–268 is disordered; sequence SLDSMKLPSGGREKQINDVN.

It belongs to the BchN/ChlN family. As to quaternary structure, protochlorophyllide reductase is composed of three subunits; ChlL, ChlN and ChlB. Forms a heterotetramer of two ChlB and two ChlN subunits. [4Fe-4S] cluster is required as a cofactor.

It localises to the plastid. The protein localises to the chloroplast. It catalyses the reaction chlorophyllide a + oxidized 2[4Fe-4S]-[ferredoxin] + 2 ADP + 2 phosphate = protochlorophyllide a + reduced 2[4Fe-4S]-[ferredoxin] + 2 ATP + 2 H2O. Its pathway is porphyrin-containing compound metabolism; chlorophyll biosynthesis (light-independent). In terms of biological role, component of the dark-operative protochlorophyllide reductase (DPOR) that uses Mg-ATP and reduced ferredoxin to reduce ring D of protochlorophyllide (Pchlide) to form chlorophyllide a (Chlide). This reaction is light-independent. The NB-protein (ChlN-ChlB) is the catalytic component of the complex. The protein is Light-independent protochlorophyllide reductase subunit N of Oltmannsiellopsis viridis (Marine flagellate).